The chain runs to 679 residues: Protein asunder (679 aa).

A coiled-coil region spans residues 519–541 (RLKVNKTKDQYRLFYRELEQLIQ). Positions 564–610 (GDASNKSDPSAAHLRSYTESPLSPERLEPTNSVNSSSSSILKASKRR) are disordered. The Nuclear localization signal (NLS) signature appears at 604 to 610 (LKASKRR).

It belongs to the Integrator subunit 13 family. Belongs to the multiprotein complex Integrator, at least composed of IntS1, IntS2, IntS3, IntS4, omd/IntS5, IntS6, defl/IntS7, IntS8, IntS9, IntS10, IntS11, IntS12, asun/IntS13, IntS14 and IntS15. The core complex associates with protein phosphatase 2A subunits mts/PP2A and Pp2A-29B, to form the Integrator-PP2A (INTAC) complex. Post-translationally, phosphorylated.

It is found in the nucleus. It localises to the cytoplasm. The protein localises to the perinuclear region. In terms of biological role, component of the integrator complex, a multiprotein complex that terminates RNA polymerase II (Pol II) transcription in the promoter-proximal region of genes. The integrator complex provides a quality checkpoint during transcription elongation by driving premature transcription termination of transcripts that are unfavorably configured for transcriptional elongation: the complex terminates transcription by (1) catalyzing dephosphorylation of the C-terminal domain (CTD) of Pol II subunit Polr2A/Rbp1 and Spt5, and (2) degrading the exiting nascent RNA transcript via endonuclease activity. The integrator complex is also involved in the 3'-end processing of the U7 snRNA, and also the spliceosomal snRNAs U1, U2, U4 and U5. The chain is Protein asunder (asun) from Drosophila mojavensis (Fruit fly).